The sequence spans 419 residues: CinA-like protein (419 aa).

The protein belongs to the CinA family.

The polypeptide is CinA-like protein (Acaryochloris marina (strain MBIC 11017)).